The primary structure comprises 133 residues: UPF0344 protein SH1980 (133 aa).

Helical transmembrane passes span Met-1–Leu-21, Val-42–Ala-62, Met-71–Ile-91, and Leu-103–Trp-123.

Belongs to the UPF0344 family.

It is found in the cell membrane. The sequence is that of UPF0344 protein SH1980 from Staphylococcus haemolyticus (strain JCSC1435).